The chain runs to 39 residues: Natriuretic peptide PaNP-d (39 aa).

A propeptide spanning residues 1–8 is cleaved from the precursor; it reads SGSKTAEI. The disordered stretch occupies residues 1–39; that stretch reads SGSKTAEIDDGCFGLPLDPIGSTSGMGCRSVPKPIPGGS. Residues C12 and C28 are joined by a disulfide bond.

The protein belongs to the natriuretic peptide family. As to expression, expressed by the venom gland.

It is found in the secreted. Its function is as follows. Snake venom natriuretic peptide that targets both NPR1 and NPR2. Exhibits hypotensive and vasodepressor activities. This is Natriuretic peptide PaNP-d from Pseudechis australis (Mulga snake).